The primary structure comprises 23 residues: GFGCYRSCWKAGHDEETCKKECS.

Disulfide bonds link Cys4-Cys22 and Cys8-Cys18.

The protein belongs to the short scorpion toxin superfamily. Potassium channel inhibitor kappa-KTx family. Kappa-KTx 1 subfamily. Monomer. In terms of processing, is not amidated. As to expression, expressed by the venom gland.

It localises to the secreted. Its function is as follows. Shows very weak blocking activity on voltage-gated potassium channels Kv10.1/KCNH1/EAG1 (6.2% inhibition by 40 uM of the toxin). Has no effect on the other voltage-gated potassium channels tested. The sequence is that of Potassium channel toxin kappa-KTx 1.3 from Heterometrus spinifer (Asia giant forest scorpion).